A 452-amino-acid polypeptide reads, in one-letter code: Glutamyl-tRNA(Gln) amidotransferase subunit A (452 aa).

Active-site charge relay system residues include Lys56 and Ser131. Ser155 (acyl-ester intermediate) is an active-site residue.

It belongs to the amidase family. GatA subfamily. Heterotrimer of A, B and C subunits.

It carries out the reaction L-glutamyl-tRNA(Gln) + L-glutamine + ATP + H2O = L-glutaminyl-tRNA(Gln) + L-glutamate + ADP + phosphate + H(+). In terms of biological role, allows the formation of correctly charged Gln-tRNA(Gln) through the transamidation of misacylated Glu-tRNA(Gln) in organisms which lack glutaminyl-tRNA synthetase. The reaction takes place in the presence of glutamine and ATP through an activated gamma-phospho-Glu-tRNA(Gln). The sequence is that of Glutamyl-tRNA(Gln) amidotransferase subunit A from Campylobacter hominis (strain ATCC BAA-381 / DSM 21671 / CCUG 45161 / LMG 19568 / NCTC 13146 / CH001A).